A 181-amino-acid chain; its full sequence is MEQFRGTTILSVRRNGKVVIGGDGQVSMGSTIMKANARKVRRLYNGKVIAGFAGGTADAFTLFERFESKLEKHSGNLTRAAVELAKDWRTDRILRRLEALLTVADSKASLIITGLGDVIEPEQSLMAIGSGGSFAQAAAKALLENTKLSARKIVEKALTIAADICIYTNQNFTIEELDSES.

Residue T7 is part of the active site. The Na(+) site is built by A162, C165, and T168.

It belongs to the peptidase T1B family. HslV subfamily. In terms of assembly, a double ring-shaped homohexamer of HslV is capped on each side by a ring-shaped HslU homohexamer. The assembly of the HslU/HslV complex is dependent on binding of ATP.

It is found in the cytoplasm. It catalyses the reaction ATP-dependent cleavage of peptide bonds with broad specificity.. Its activity is regulated as follows. Allosterically activated by HslU binding. Functionally, protease subunit of a proteasome-like degradation complex believed to be a general protein degrading machinery. This Coxiella burnetii (strain Dugway 5J108-111) protein is ATP-dependent protease subunit HslV.